The primary structure comprises 411 residues: Calmodulin-binding receptor-like cytoplasmic kinase 2 (411 aa).

2 disordered regions span residues 1–44 and 66–99; these read MPSR…DTTT and SNYIDNSKSSSDNNIRSRRSSTGSSSVQRSYGNA. 2 stretches are compositionally biased toward low complexity: residues 16–44 and 66–95; these read TTSSNYSNTTFTDRSFPTTPARTSTDTTT and SNYIDNSKSSSDNNIRSRRSSTGSSSVQRS. At Thr108 the chain carries Phosphothreonine. A Protein kinase domain is found at 119–398; it reads FSPSFRIGQG…MKKCSEILWG (280 aa). ATP is bound by residues 125–133 and Lys147; that span reads IGQGGFGTV. The tract at residues 134-159 is caM-binding; sequence YKVKLRDGKTFAVKRAKKSMHDDRQG. Asp247 (proton acceptor) is an active-site residue. Phosphoserine occurs at positions 251 and 283. Thr284 and Thr289 each carry phosphothreonine. Tyr297 is subject to Phosphotyrosine.

The protein belongs to the protein kinase superfamily. Ser/Thr protein kinase family. In terms of assembly, interacts with calmodulin (CaM) in a Ca(2+)-dependent manner.

The protein localises to the cytoplasm. The catalysed reaction is L-seryl-[protein] + ATP = O-phospho-L-seryl-[protein] + ADP + H(+). It carries out the reaction L-threonyl-[protein] + ATP = O-phospho-L-threonyl-[protein] + ADP + H(+). The sequence is that of Calmodulin-binding receptor-like cytoplasmic kinase 2 (CRCK2) from Arabidopsis thaliana (Mouse-ear cress).